A 546-amino-acid chain; its full sequence is Coatomer subunit delta (546 aa).

Residues 190–440 (NRFMGSKDPN…VIFTIPVFPQ (251 aa)) are interaction with DSL1. The interval 236 to 287 (PMATSQRAGHSATGGMKLGGGAGRRAGAAPRPSAISSASSGTPPPPEEDVPE) is disordered. Over residues 260–276 (RAGAAPRPSAISSASSG) the composition is skewed to low complexity. Residue threonine 277 is modified to Phosphothreonine. Residues 288 to 546 (NNGILISIKE…SLKSDEYLVQ (259 aa)) enclose the MHD domain.

The protein belongs to the adaptor complexes medium subunit family. Delta-COP subfamily. As to quaternary structure, oligomeric complex that consists of at least the alpha, beta, beta', gamma, delta, epsilon and zeta subunits. Interacts with DSL1.

It localises to the cytoplasm. The protein resides in the golgi apparatus membrane. Its subcellular location is the cytoplasmic vesicle. The protein localises to the COPI-coated vesicle membrane. In terms of biological role, the coatomer is a cytosolic protein complex that binds to dilysine motifs and reversibly associates with Golgi non-clathrin-coated vesicles, which further mediate biosynthetic protein transport from the ER, via the Golgi up to the trans Golgi network. Coatomer complex is required for budding from Golgi membranes, and is essential for the retrograde Golgi-to-ER transport of dilysine-tagged proteins. In Saccharomyces cerevisiae (strain ATCC 204508 / S288c) (Baker's yeast), this protein is Coatomer subunit delta (RET2).